The chain runs to 158 residues: 6,7-dimethyl-8-ribityllumazine synthase (158 aa).

5-amino-6-(D-ribitylamino)uracil-binding positions include phenylalanine 23, 61-63 (SFE), and 85-87 (AVI). 90–91 (ET) provides a ligand contact to (2S)-2-hydroxy-3-oxobutyl phosphate. The active-site Proton donor is histidine 93. Phenylalanine 118 provides a ligand contact to 5-amino-6-(D-ribitylamino)uracil. Arginine 132 lines the (2S)-2-hydroxy-3-oxobutyl phosphate pocket.

It belongs to the DMRL synthase family.

It catalyses the reaction (2S)-2-hydroxy-3-oxobutyl phosphate + 5-amino-6-(D-ribitylamino)uracil = 6,7-dimethyl-8-(1-D-ribityl)lumazine + phosphate + 2 H2O + H(+). Its pathway is cofactor biosynthesis; riboflavin biosynthesis; riboflavin from 2-hydroxy-3-oxobutyl phosphate and 5-amino-6-(D-ribitylamino)uracil: step 1/2. Its function is as follows. Catalyzes the formation of 6,7-dimethyl-8-ribityllumazine by condensation of 5-amino-6-(D-ribitylamino)uracil with 3,4-dihydroxy-2-butanone 4-phosphate. This is the penultimate step in the biosynthesis of riboflavin. The chain is 6,7-dimethyl-8-ribityllumazine synthase from Prochlorococcus marinus (strain MIT 9215).